A 329-amino-acid chain; its full sequence is GTP 3',8-cyclase (329 aa).

The Radical SAM core domain maps to 8-234 (AFARKFYYLR…QLRQRSDGPA (227 aa)). Arginine 17 contributes to the GTP binding site. Residues cysteine 24 and cysteine 28 each contribute to the [4Fe-4S] cluster site. S-adenosyl-L-methionine is bound at residue tyrosine 30. Residue cysteine 31 participates in [4Fe-4S] cluster binding. Arginine 68 is a GTP binding site. Glycine 72 contributes to the S-adenosyl-L-methionine binding site. Threonine 99 lines the GTP pocket. Residue serine 123 participates in S-adenosyl-L-methionine binding. Lysine 160 is a binding site for GTP. Residue methionine 194 participates in S-adenosyl-L-methionine binding. Positions 257 and 260 each coordinate [4Fe-4S] cluster. Position 262–264 (262–264 (RLR)) interacts with GTP. Position 274 (cysteine 274) interacts with [4Fe-4S] cluster.

It belongs to the radical SAM superfamily. MoaA family. As to quaternary structure, monomer and homodimer. [4Fe-4S] cluster is required as a cofactor.

The catalysed reaction is GTP + AH2 + S-adenosyl-L-methionine = (8S)-3',8-cyclo-7,8-dihydroguanosine 5'-triphosphate + 5'-deoxyadenosine + L-methionine + A + H(+). The protein operates within cofactor biosynthesis; molybdopterin biosynthesis. Catalyzes the cyclization of GTP to (8S)-3',8-cyclo-7,8-dihydroguanosine 5'-triphosphate. This Salmonella dublin (strain CT_02021853) protein is GTP 3',8-cyclase.